The sequence spans 142 residues: Large ribosomal subunit protein uL11 (142 aa).

Belongs to the universal ribosomal protein uL11 family. Part of the ribosomal stalk of the 50S ribosomal subunit. Interacts with L10 and the large rRNA to form the base of the stalk. L10 forms an elongated spine to which L12 dimers bind in a sequential fashion forming a multimeric L10(L12)X complex. One or more lysine residues are methylated.

In terms of biological role, forms part of the ribosomal stalk which helps the ribosome interact with GTP-bound translation factors. In Yersinia pseudotuberculosis serotype O:1b (strain IP 31758), this protein is Large ribosomal subunit protein uL11.